The sequence spans 493 residues: Dipeptide permease D (493 aa).

Transmembrane regions (helical) follow at residues 14–34, 49–69, 91–111, 138–158, 167–187, 212–232, 235–255, 267–287, 312–332, 344–364, 379–399, 413–433, and 458–478; these read VVAL…LLIL, ALFS…GYLA, LVLG…AIIV, GGFS…PIAC, WAMG…IFLC, NWGW…VLFW, WAVY…GKIY, LGLI…AQQG, MFQS…AWLI, IWGK…ILTL, LMIA…PVAM, VLTG…AGVI, and VFSE…LIWL.

It belongs to the major facilitator superfamily. Proton-dependent oligopeptide transporter (POT/PTR) (TC 2.A.17) family. DtpD subfamily.

Its subcellular location is the cell inner membrane. Functionally, probable proton-dependent permease that transports dipeptides. This is Dipeptide permease D from Citrobacter rodentium (strain ICC168) (Citrobacter freundii biotype 4280).